A 108-amino-acid polypeptide reads, in one-letter code: Signal recognition particle 19 kDa protein (108 aa).

This sequence belongs to the SRP19 family. As to quaternary structure, part of the signal recognition particle protein translocation system, which is composed of SRP and FtsY. Archaeal SRP consists of a 7S RNA molecule of 300 nucleotides and two protein subunits: SRP54 and SRP19.

The protein localises to the cytoplasm. Functionally, involved in targeting and insertion of nascent membrane proteins into the cytoplasmic membrane. Binds directly to 7S RNA and mediates binding of the 54 kDa subunit of the SRP. The polypeptide is Signal recognition particle 19 kDa protein (Thermococcus kodakarensis (strain ATCC BAA-918 / JCM 12380 / KOD1) (Pyrococcus kodakaraensis (strain KOD1))).